Reading from the N-terminus, the 115-residue chain is Cell division protein FtsL (115 aa).

Topologically, residues M1–Q25 are cytoplasmic. Residues G26 to F46 traverse the membrane as a helical segment. At K47–E115 the chain is on the periplasmic side.

Belongs to the FtsL family. Part of a complex composed of FtsB, FtsL and FtsQ.

It localises to the cell inner membrane. Essential cell division protein. May link together the upstream cell division proteins, which are predominantly cytoplasmic, with the downstream cell division proteins, which are predominantly periplasmic. The protein is Cell division protein FtsL of Coxiella burnetii (strain RSA 493 / Nine Mile phase I).